A 407-amino-acid chain; its full sequence is SERPINE1 mRNA-binding protein 1 (407 aa).

Ser-25 carries the phosphoserine modification. Positions 33–227 (AAENKKKEAG…GSGSHNWGTV (195 aa)) are disordered. Residues 51-68 (AKSAAQAAAQTNSNAAGK) are compositionally biased toward low complexity. An N6-acetyllysine; alternate modification is found at Lys-52. A Glycyl lysine isopeptide (Lys-Gly) (interchain with G-Cter in SUMO1); alternate cross-link involves residue Lys-52. Lys-68 is modified (N6-acetyllysine). 3 stretches are compositionally biased toward basic and acidic residues: residues 70–80 (LRKESQKDRKN), 89–114 (VDKKEETQPPVALKKEGIRRVGRRPD), and 122–162 (KIID…DRPI). Residue Lys-102 forms a Glycyl lysine isopeptide (Lys-Gly) (interchain with G-Cter in SUMO1); alternate linkage. A Glycyl lysine isopeptide (Lys-Gly) (interchain with G-Cter in SUMO2) cross-link involves residue Lys-102. Lys-102 participates in a covalent cross-link: Glycyl lysine isopeptide (Lys-Gly) (interchain with G-Cter in SUMO2); alternate. Lys-122 and Lys-140 each carry N6-acetyllysine. Gly residues predominate over residues 164–182 (GRGGLGRGRGGRGRGMGRG). Residues Arg-165 and Arg-188 each carry the omega-N-methylarginine modification. Over residues 183 to 199 (DGFDSRGKREFDRHSGS) the composition is skewed to basic and acidic residues. Residues Ser-197, Ser-199, Ser-203, Ser-205, and Ser-208 each carry the phosphoserine modification. At Lys-211 the chain carries N6-acetyllysine; alternate. Lys-211 participates in a covalent cross-link: Glycyl lysine isopeptide (Lys-Gly) (interchain with G-Cter in SUMO2); alternate. Arg-216 is modified (omega-N-methylarginine). Ser-221 is subject to Phosphoserine. Position 226 is a phosphothreonine (Thr-226). A Glycyl lysine isopeptide (Lys-Gly) (interchain with G-Cter in SUMO1); alternate cross-link involves residue Lys-228. Lys-228 participates in a covalent cross-link: Glycyl lysine isopeptide (Lys-Gly) (interchain with G-Cter in SUMO2); alternate. Ser-234 is subject to Phosphoserine. The segment covering 242–256 (ISYNCSDLDQSNVTE) has biased composition (polar residues). 2 disordered regions span residues 242–291 (ISYN…TLDE) and 327–407 (SKSE…PALA). Residues 261–274 (GEEHPVADTENKEN) are compositionally biased toward basic and acidic residues. Residue Lys-280 forms a Glycyl lysine isopeptide (Lys-Gly) (interchain with G-Cter in SUMO1); alternate linkage. A Glycyl lysine isopeptide (Lys-Gly) (interchain with G-Cter in SUMO2) cross-link involves residue Lys-280. A Glycyl lysine isopeptide (Lys-Gly) (interchain with G-Cter in SUMO2); alternate cross-link involves residue Lys-280. 2 stretches are compositionally biased toward basic and acidic residues: residues 281 to 291 (EEGPKEMTLDE) and 327 to 341 (SKSEEAHAEDSVMDH). Lys-328 bears the N6-acetyllysine mark. The residue at position 329 (Ser-329) is a Phosphoserine. Residues 362 to 371 (GRPGRGGRGG) are compositionally biased toward gly residues. Omega-N-methylarginine occurs at positions 363, 366, and 369. A phosphoserine mark is found at Ser-391 and Ser-393.

The protein belongs to the SERBP1-HABP4 family. As to quaternary structure, associates with mature 80S ribosomes. Interacts with EEF2/eEF2; interaction sequesters EEF2/eEF2 at the A-site of the ribosome, thereby blocking the interaction sites of the mRNA-tRNA complex, promoting ribosome stabilization and hibernation. Interacts with SPIN1. Interacts with CHD3 and TDRD3. Interacts with ZDHHC17 (via ANK repeats). Phosphorylation by MTOR inhibits SERBP1 and relieves ribosome hibernation.

In terms of biological role, ribosome-binding protein that promotes ribosome hibernation, a process during which ribosomes are stabilized in an inactive state and preserved from proteasomal degradation. Acts via its association with EEF2/eEF2 factor, sequestering EEF2/eEF2 at the A-site of the ribosome and promoting ribosome stabilization and storage in an inactive state. May also play a role in the regulation of mRNA stability: binds to the 3'-most 134 nt of the SERPINE1/PAI1 mRNA, a region which confers cyclic nucleotide regulation of message decay. Seems to play a role in PML-nuclear bodies formation. This is SERPINE1 mRNA-binding protein 1 from Oryctolagus cuniculus (Rabbit).